Consider the following 118-residue polypeptide: Putative membrane protein insertion efficiency factor (118 aa).

It belongs to the UPF0161 family.

It is found in the cell inner membrane. Its function is as follows. Could be involved in insertion of integral membrane proteins into the membrane. The protein is Putative membrane protein insertion efficiency factor of Helicobacter pylori (strain P12).